Reading from the N-terminus, the 58-residue chain is Single-pass membrane and coiled-coil domain-containing protein 4 homolog (58 aa).

A coiled-coil region spans residues 1–31; the sequence is MRQLKGKVKETRKQKKERKLDNLETQAKIRT. The helical transmembrane segment at 31–51 threads the bilayer; that stretch reads TVVLPALGVLAVFLVLFVYLK.

Belongs to the SMCO4 family.

Its subcellular location is the membrane. The sequence is that of Single-pass membrane and coiled-coil domain-containing protein 4 homolog from Drosophila melanogaster (Fruit fly).